The following is a 507-amino-acid chain: ATP synthase subunit alpha, chloroplastic (507 aa).

170–177 (GDRQTGKT) is an ATP binding site.

It belongs to the ATPase alpha/beta chains family. As to quaternary structure, F-type ATPases have 2 components, CF(1) - the catalytic core - and CF(0) - the membrane proton channel. CF(1) has five subunits: alpha(3), beta(3), gamma(1), delta(1), epsilon(1). CF(0) has four main subunits: a, b, b' and c.

The protein resides in the plastid. The protein localises to the chloroplast thylakoid membrane. It catalyses the reaction ATP + H2O + 4 H(+)(in) = ADP + phosphate + 5 H(+)(out). In terms of biological role, produces ATP from ADP in the presence of a proton gradient across the membrane. The alpha chain is a regulatory subunit. This is ATP synthase subunit alpha, chloroplastic from Huperzia lucidula (Shining clubmoss).